A 774-amino-acid polypeptide reads, in one-letter code: Beta-xylosidase/alpha-L-arabinofuranosidase 2 (774 aa).

A signal peptide spans 1–33 (MASVENRTPNVSVFLCFFVLFATLLLSGGRVSS). The N-linked (GlcNAc...) asparagine glycan is linked to N136. The active site involves D303. N437 carries N-linked (GlcNAc...) asparagine glycosylation.

The protein belongs to the glycoside hydrolase 3 family.

The protein resides in the secreted. The protein localises to the extracellular space. It localises to the extracellular matrix. The enzyme catalyses Hydrolysis of (1-&gt;4)-beta-D-xylans, to remove successive D-xylose residues from the non-reducing termini.. The catalysed reaction is Hydrolysis of terminal non-reducing alpha-L-arabinofuranoside residues in alpha-L-arabinosides.. A bifunctional beta-xylosidase/alpha-L-arabinosidase, exo-enzyme that acts synergistically with endohydrolases. Releases xylose and arabinose from cell walls. The sequence is that of Beta-xylosidase/alpha-L-arabinofuranosidase 2 from Medicago sativa subsp. varia (Alfalfa).